A 224-amino-acid polypeptide reads, in one-letter code: Giant hemoglobin linker AV-1 chain (224 aa).

The LDL-receptor class A domain maps to His62–Val103. 3 cysteine pairs are disulfide-bonded: Cys64–Cys77, Cys71–Cys90, and Cys84–Cys101. N-linked (GlcNAc...) asparagine glycosylation occurs at Asn108.

In terms of assembly, giant hemoglobin is composed of four heme-containing chains (AI to AIV), and two linker chains (AV and AVI).

Its function is as follows. Acts as a linker for the assembly of heme-containing chains in the construction of giant hemoglobin. This chain is Giant hemoglobin linker AV-1 chain, found in Lamellibrachia sp. (Deep-sea giant tube worm).